Here is a 349-residue protein sequence, read N- to C-terminus: Probable G-protein coupled receptor 21 (349 aa).

Residues 1–32 (MNSTWDGNQSSHPFCLLALGYLETVRFCLLEV) lie on the Extracellular side of the membrane. Asparagine 2 and asparagine 8 each carry an N-linked (GlcNAc...) asparagine glycan. A helical transmembrane segment spans residues 33–53 (LIIVFLTVLIISGNIIVIFVF). At 54–75 (HCAPLLNHHSTSYFIQTMAYAD) the chain is on the cytoplasmic side. A helical transmembrane segment spans residues 76 to 96 (LLVGVSCLVPSLSLLYYPLPI). Topologically, residues 97–104 (EEAMTCQV) are extracellular. The chain crosses the membrane as a helical span at residues 105–125 (FGFVVSVLKSISMASLACISI). Residues 126–147 (DRYIAITKPLTYNTLVTPWRLR) are Cytoplasmic-facing. A helical membrane pass occupies residues 148–168 (LCIFLIWLYSTLVFLPSFFHW). Over 169–191 (GKPGYHGDVFQWCAESWHTNSYF) the chain is Extracellular. The chain crosses the membrane as a helical span at residues 192–212 (TLFIVMMLYAPAALIVCFTYF). Residues 213 to 252 (NIFRICQQHTKEISERQARFSSQNGETGEPQTCPDKRYAM) are Cytoplasmic-facing. Residues 253–273 (VLFRITSVFYVLWLPYIIYFL) form a helical membrane-spanning segment. Over 274-283 (LESSTGCSSR) the chain is Extracellular. Residues 284–304 (LASFLTTWLAISNSFCNCIIY) traverse the membrane as a helical segment. The Cytoplasmic portion of the chain corresponds to 305-349 (SLSNSVFQRGLKGLSGSLCTSCASHTTAKDPYTVRCKGPPNGSHI).

The protein belongs to the G-protein coupled receptor 1 family.

The protein localises to the cell membrane. Functionally, orphan receptor. The polypeptide is Probable G-protein coupled receptor 21 (Gpr21) (Mus musculus (Mouse)).